The sequence spans 142 residues: Transcription antitermination protein NusB (142 aa).

The protein belongs to the NusB family.

Functionally, involved in transcription antitermination. Required for transcription of ribosomal RNA (rRNA) genes. Binds specifically to the boxA antiterminator sequence of the ribosomal RNA (rrn) operons. The sequence is that of Transcription antitermination protein NusB from Borreliella burgdorferi (strain ATCC 35210 / DSM 4680 / CIP 102532 / B31) (Borrelia burgdorferi).